Reading from the N-terminus, the 2146-residue chain is YLP motif-containing protein 1 (2146 aa).

2 disordered regions span residues 1–381 (MYPN…ARLK) and 562–880 (PPVM…FKMQ). Pro residues predominate over residues 14 to 26 (YPPPPVPPPPPVA). Low complexity-rich tracts occupy residues 27-48 (LPEA…PSSS) and 58-79 (LAQL…LQPH). Composition is skewed to pro residues over residues 80 to 92 (HLPP…PPVM), 101 to 113 (QPPP…PPGP), 147 to 157 (PESPPVPPGSY), 165 to 175 (MPPPQPPPSYY), and 183 to 194 (YLPPAQPSPSQS). Over residues 195–237 (PPSQSYLAPTPSYSSSSSSSQSYLSHSQSYLPSSQASPSRPSQ) the composition is skewed to low complexity. 2 stretches are compositionally biased toward polar residues: residues 256–279 (NKTT…QQQA) and 286–308 (STMT…LQQR). A compositionally biased stretch (basic residues) spans 309 to 319 (TKVHLPGHKKG). Basic and acidic residues predominate over residues 325–334 (DTPEPVKEEV). 3 stretches are compositionally biased toward pro residues: residues 349 to 368 (EEPP…PPEE), 562 to 579 (PPVM…PGMP), and 586 to 642 (GPPP…PQGI). Low complexity predominate over residues 643 to 663 (PPQLTAAPVPPASSSQSSQVP). A compositionally biased stretch (polar residues) spans 692–702 (AGPSEQVNSKA). Lysine 735 carries the post-translational modification N6-methyllysine. Serine 756 bears the Phosphoserine mark. Residues 758–806 (RGPRFDGPRRFEDLGSRCEGPRPKGPRFEGNRPDGPRPRYEGHPAEGTK) are compositionally biased toward basic and acidic residues. Arginine 814 carries the omega-N-methylarginine modification. 2 stretches are compositionally biased toward polar residues: residues 820-835 (FYIT…QSGP) and 868-880 (DTSS…FKMQ). Serine 829 carries the phosphoserine modification. Position 831 is an omega-N-methylarginine (arginine 831). Residue lysine 891 forms a Glycyl lysine isopeptide (Lys-Gly) (interchain with G-Cter in SUMO2) linkage. 2 disordered regions span residues 895–1211 (AAQS…GRNA) and 1243–1351 (NRED…DDRW). 2 stretches are compositionally biased toward polar residues: residues 896–909 (AQSN…QQEP) and 923–933 (NWDQNVQSMET). A Glycyl lysine isopeptide (Lys-Gly) (interchain with G-Cter in SUMO1); alternate cross-link involves residue lysine 983. Residue lysine 983 forms a Glycyl lysine isopeptide (Lys-Gly) (interchain with G-Cter in SUMO2); alternate linkage. Composition is skewed to basic and acidic residues over residues 994-1012 (NNQD…RLEG), 1027-1036 (RMEDTRDKGL), and 1053-1093 (KQED…REKV). Lysine 1053 is covalently cross-linked (Glycyl lysine isopeptide (Lys-Gly) (interchain with G-Cter in SUMO1); alternate). Lysine 1053 is covalently cross-linked (Glycyl lysine isopeptide (Lys-Gly) (interchain with G-Cter in SUMO2); alternate). Serine 1100 and serine 1119 each carry phosphoserine. Composition is skewed to basic and acidic residues over residues 1129 to 1211 (GSRE…GRNA) and 1243 to 1264 (NRED…RGPW). Residues 1266–1276 (DDWERDQDMDE) are compositionally biased toward acidic residues. The span at 1277-1328 (DYNREMERDMDRDVDRISRPMDMYDRSLDNEWDRDYGRPLDEQESQFRERDI) shows a compositional bias: basic and acidic residues. A compositionally biased stretch (pro residues) spans 1330–1342 (SLPPLPPLPPLPP). Position 1402 is a phosphoserine (serine 1402). 3 disordered regions span residues 1407 to 1438 (PSDV…SLDS), 1469 to 1573 (QKEQ…EQER), and 1602 to 1828 (IPSA…PPGR). The span at 1417–1430 (AEHMPSSHHSSEMM) shows a compositional bias: low complexity. Positions 1469–1480 (QKEQLQKMKDFG) are enriched in basic and acidic residues. The segment covering 1505–1520 (MYPPPGSYRPPPPMGK) has biased composition (pro residues). Low complexity predominate over residues 1521–1539 (PPGSIVRPSAPPARSSVPV). Pro residues-rich tracts occupy residues 1540–1562 (TRPP…PPVI) and 1606–1636 (PVLP…PPPV). Residue lysine 1652 forms a Glycyl lysine isopeptide (Lys-Gly) (interchain with G-Cter in SUMO2) linkage. Composition is skewed to basic and acidic residues over residues 1662 to 1696 (ITLR…EPYF), 1704 to 1774 (ADHR…DRPV), 1783 to 1793 (GERRTYPEERM), and 1809 to 1828 (RVEK…PPGR). Lysine 1710 participates in a covalent cross-link: Glycyl lysine isopeptide (Lys-Gly) (interchain with G-Cter in SUMO2). Residues 2096-2103 (KKRVRWAD) are involved in interaction with PPP1CA.

Interacts with PPP1CA and NCOA5. Forms a complex with ILF2, ILF3, KHDRBS1, RBMX, NCOA5 and PPP1CA. In terms of tissue distribution, expressed in neuronal, neuroblastoma and embryonic kidney cell lines (at protein level).

The protein resides in the nucleus. It is found in the nucleus speckle. In terms of biological role, plays a role in the reduction of telomerase activity during differentiation of embryonic stem cells by binding to the core promoter of TERT and controlling its down-regulation. The chain is YLP motif-containing protein 1 (YLPM1) from Homo sapiens (Human).